Reading from the N-terminus, the 1755-residue chain is MGVSGSKGQKLFVSVLQRLLSERGLHVKESSAIEFYQFLIKVSPWFPEEGGLNLQDWKRVGREMKRYAAEHGTDSIPKQAYPIWLQLREILTEQSDLVLLSAEAKSVTEEELEEGLTGLLSTSSQEKTYGTRGTAYAEIDTEVDKLSEHIYDEPYEEKEKADKNEEKDHVRKIKKVVQRKENSEGKRKEKDSKAFLATDWNDDDLSPEDWDDLEEQAAHYHDDDELILPVKRKVVKKKPQALRRKPLPPVGFAGAMAEAREKGDLTFTFPVVFMGESDEDDTPVWEPLPLKTLKELQSAVRTMGPSAPYTLQVVDMVASQWLTPSDWHQTARATLSPGDYVLWRTEYEEKSKEMVQKAAGKRKGKVSLDMLLGTGQFLSPSSQIKLSKDVLKDVTTNAVLAWRAIPPPGVKKTVLAGLKQGNEESYETFISRLEEAVYRMMPRGEGSDILIKQLAWENANSLCQDLIRPIRKTGTIQDYIRACLDASPAVVQGMAYAAAMRGQKYSTFVKQTYGGGKGGQGAEGPVCFSCGKTGHIRKDCKDEKGSKRAPPGLCPRCKKGYHWKSECKSKFDKDGNPLPPLETNAENSKNLVKGQSPSPAQKGDGVKGSGLNPEAPPFTIHDLPRGTPGSAGLDLSSQKDLILSLEDGVSLVPTLVKGTLPEGTTGLIIGRSSNYKKGLEVLPGVIDSDFQGEIKVMVKAAKNAVIIHKGERIAQLLLLPYLKLPNPVIKEERGSEGFGSTSHVHWVQEISDSRPMLHIYLNGRRFLGLLDTGADKTCIAGRDWPANWPIHQTESSLQGLGMACGVARSSQPLRWQHEDKSGIIHPFVIPTLPFTLWGRDIMKDIKVRLMTDSPDDSQDLMIGAIESNLFADQISWKSDQPVWLNQWPLKQEKLQALQQLVTEQLQLGHLEESNSPWNTPVFVIKKKSGKWRLLQDLRAVNATMHDMGALQPGLPSPVAVPKGWEIIIIDLQDCFFNIKLHPEDCKRFAFSVPSPNFKRPYQRFQWKVLPQGMKNSPTLCQKFVDKAILTVRDKYQDSYIVHYMDDILLAHPSRSIVDEILTSMIQALNKHGLVVSTEKIQKYDNLKYLGTHIQGDSVSYQKLQIRTDKLRTLNDFQKLLGNINWIRPFLKLTTGELKPLFEILNGDSNPISTRKLTPEACKALQLMNERLSTARVKRLDLSQPWSLCILKTEYTPTACLWQDGVVEWIHLPHISPKVITPYDIFCTQLIIKGRHRSKELFSKDPDYIVVPYTKVQFDLLLQEKEDWPISLLGFLGEVHFHLPKDPLLTFTLQTAIIFPHMTSTTPLEKGIVIFTDGSANGRSVTYIQGREPIIKENTQNTAQQAEIVAVITAFEEVSQPFNLYTDSKYVTGLFPEIETATLSPRTKIYTELKHLQRLIHKRQEKFYIGHIRGHTGLPGPLAQGNAYADSLTRILTALESAQESHALHHQNAAALRFQFHITREQAREIVKLCPNCPDWGHAPQLGVNPRGLKPRVLWQMDVTHVSEFGKLKYVHVTVDTYSHFTFATARTGEATKDVLQHLAQSFAYMGIPQKIKTDNAPAYVSRSIQEFLARWKISHVTGIPYNPQGQAIVERTHQNIKAQLNKLQKAGKYYTPHHLLAHALFVLNHVNMDNQGHTAAERHWGPISADPKPMVMWKDLLTGSWKGPDVLITAGRGYACVFPQDAETPIWVPDRFIRPFTERKEATPTPGTAEKTPPRDEKDQQESPKNESSPHQREDGLATSAGVDLRSGGGP.

A lipid anchor (N-myristoyl glycine; by host) is attached at Gly-2. Composition is skewed to basic and acidic residues over residues 151–169 and 178–191; these read YDEP…EKDH and QRKE…KEKD. The tract at residues 151–191 is disordered; sequence YDEPYEEKEKADKNEEKDHVRKIKKVVQRKENSEGKRKEKD. The PTAP/PSAP motif signature appears at 305–308; it reads PSAP. 2 CCHC-type zinc fingers span residues 525–542 and 552–569; these read PVCF…DCKD and GLCP…ECKS. The tract at residues 572 to 631 is disordered; sequence DKDGNPLPPLETNAENSKNLVKGQSPSPAQKGDGVKGSGLNPEAPPFTIHDLPRGTPGSA. Over residues 584 to 599 the composition is skewed to polar residues; the sequence is NAENSKNLVKGQSPSP. Residues 766 to 841 form the Peptidase A2 domain; sequence FLGLLDTGAD…LPFTLWGRDI (76 aa). Asp-771 serves as the catalytic Protease; shared with dimeric partner. A Reverse transcriptase domain is found at 905 to 1093; it reads LQLGHLEESN…DNLKYLGTHI (189 aa). Residues Asp-970, Asp-1045, Asp-1046, Asp-1316, Glu-1346, Asp-1366, and Asp-1429 each coordinate Mg(2+). In terms of domain architecture, RNase H type-1 spans 1307–1437; sequence LEKGIVIFTD…ADSLTRILTA (131 aa). The segment at 1436–1477 adopts an Integrase-type zinc-finger fold; that stretch reads TALESAQESHALHHQNAAALRFQFHITREQAREIVKLCPNCP. Zn(2+) contacts are provided by His-1445, His-1449, Cys-1473, and Cys-1476. The region spanning 1490 to 1647 is the Integrase catalytic domain; sequence RGLKPRVLWQ…TAAERHWGPI (158 aa). Asp-1501, Asp-1558, and Glu-1594 together coordinate Mg(2+). Residues 1653–1702 constitute a DNA-binding region (integrase-type); the sequence is PMVMWKDLLTGSWKGPDVLITAGRGYACVFPQDAETPIWVPDRFIRPFTE. The segment at 1699 to 1755 is disordered; sequence PFTERKEATPTPGTAEKTPPRDEKDQQESPKNESSPHQREDGLATSAGVDLRSGGGP. The segment covering 1716 to 1740 has biased composition (basic and acidic residues); the sequence is TPPRDEKDQQESPKNESSPHQREDG.

The protein belongs to the retroviral Pol polyprotein family. In terms of assembly, homodimer; when myristoylated. Homodimer. As to quaternary structure, homooctamer. In terms of assembly, homotrimer. Requires Mg(2+) as cofactor. In terms of processing, specific enzymatic cleavages in vivo yield mature proteins. Released by autocatalytic processing. Post-translationally, myristoylated. Myristoylation of the matrix (MA) domain mediates the transport and binding of Gag polyproteins to the host plasma membrane and is required for the assembly of viral particles.

The protein localises to the virion. It catalyses the reaction DNA(n) + a 2'-deoxyribonucleoside 5'-triphosphate = DNA(n+1) + diphosphate. The enzyme catalyses Endonucleolytic cleavage to 5'-phosphomonoester.. The catalysed reaction is dUTP + H2O = dUMP + diphosphate + H(+). Inhibited by pepstatin A. Functionally, matrix protein. Nucleocapsid protein p14: Binds strongly to viral nucleic acids and promote their aggregation. Also destabilizes the nucleic acids duplexes via highly structured zinc-binding motifs. In terms of biological role, capsid protein. Its function is as follows. NC-dUTPase has dUTPase activity, thereby preventing incorporation of uracil into DNA. Functionally, the aspartyl protease mediates proteolytic cleavages of Gag and Gag-Pol polyproteins during or shortly after the release of the virion from the plasma membrane. Cleavages take place as an ordered, step-wise cascade to yield mature proteins. This process is called maturation. Displays maximal activity during the budding process just prior to particle release from the cell. RT is a multifunctional enzyme that converts the viral dimeric RNA genome into dsDNA in the cytoplasm, shortly after virus entry into the cell. This enzyme displays a DNA polymerase activity that can copy either DNA or RNA templates, and a ribonuclease H (RNase H) activity that cleaves the RNA strand of RNA-DNA heteroduplexes in a partially processive 3' to 5' endonucleasic mode. Conversion of viral genomic RNA into dsDNA requires many steps. A tRNA binds to the primer-binding site (PBS) situated at the 5' end of the viral RNA. RT uses the 3' end of the tRNA primer to perfom a short round of RNA-dependent minus-strand DNA synthesis. The reading proceeds through the U5 region and ends after the repeated (R) region which is present at both ends of viral RNA. The portion of the RNA-DNA heteroduplex is digested by the RNase H, resulting in a ssDNA product attached to the tRNA primer. This ssDNA/tRNA hybridizes with the identical R region situated at the 3' end of viral RNA. This template exchange, known as minus-strand DNA strong stop transfer, can be either intra- or intermolecular. RT uses the 3' end of this newly synthesized short ssDNA to perfom the RNA-dependent minus-strand DNA synthesis of the whole template. RNase H digests the RNA template except for a polypurine tract (PPT) situated at the 5' end of the genome. It is not clear if both polymerase and RNase H activities are simultaneous. RNase H probably can proceed both in a polymerase-dependent (RNA cut into small fragments by the same RT performing DNA synthesis) and a polymerase-independent mode (cleavage of remaining RNA fragments by free RTs). Secondly, RT performs DNA-directed plus-strand DNA synthesis using the PPT that has not been removed by RNase H as primers. PPT and tRNA primers are then removed by RNase H. The 3' and 5' ssDNA PBS regions hybridize to form a circular dsDNA intermediate. Strand displacement synthesis by RT to the PBS and PPT ends produces a blunt ended, linear dsDNA copy of the viral genome that includes long terminal repeats (LTRs) at both ends. In terms of biological role, catalyzes viral DNA integration into the host chromosome, by performing a series of DNA cutting and joining reactions. This is Gag-Pro-Pol polyprotein (gag-pro-pol) from Mus musculus (Mouse).